We begin with the raw amino-acid sequence, 335 residues long: Beta-ketoacyl-[acyl-carrier-protein] synthase III (335 aa).

Residues Cys119 and His261 contribute to the active site. An ACP-binding region spans residues 262 to 266 (QANQR). Residue Asn291 is part of the active site.

Belongs to the thiolase-like superfamily. FabH family. Homodimer.

The protein localises to the cytoplasm. It catalyses the reaction malonyl-[ACP] + acetyl-CoA + H(+) = 3-oxobutanoyl-[ACP] + CO2 + CoA. The protein operates within lipid metabolism; fatty acid biosynthesis. Its function is as follows. Catalyzes the condensation reaction of fatty acid synthesis by the addition to an acyl acceptor of two carbons from malonyl-ACP. Catalyzes the first condensation reaction which initiates fatty acid synthesis and may therefore play a role in governing the total rate of fatty acid production. Possesses both acetoacetyl-ACP synthase and acetyl transacylase activities. Its substrate specificity determines the biosynthesis of branched-chain and/or straight-chain of fatty acids. The sequence is that of Beta-ketoacyl-[acyl-carrier-protein] synthase III from Prochlorococcus marinus (strain MIT 9301).